Consider the following 102-residue polypeptide: Putative nuclear receptor corepressor 1-like protein NCOR1P1 (102 aa).

A compositionally biased stretch (polar residues) spans 1–18; sequence MSSSGYPPNQGAFSTEQS. The interval 1-68 is disordered; it reads MSSSGYPPNQ…DQNASPSKLS (68 aa). Residues 68–100 are a coiled coil; the sequence is SKEELIECMDRVDREIAKVEQQILKLKKKQVKV.

This sequence belongs to the N-CoR nuclear receptor corepressors family.

The protein is Putative nuclear receptor corepressor 1-like protein NCOR1P1 (NCOR1P1) of Homo sapiens (Human).